We begin with the raw amino-acid sequence, 394 residues long: Elongation factor Tu (394 aa).

Positions 10–205 (KPHMNVGTIG…SMDNYFDLPE (196 aa)) constitute a tr-type G domain. The interval 19–26 (GHVDHGKT) is G1. Residue 19-26 (GHVDHGKT) coordinates GTP. Threonine 26 serves as a coordination point for Mg(2+). Positions 61–65 (GITIN) are G2. Positions 82 to 85 (DCPG) are G3. Residues 82 to 86 (DCPGH) and 137 to 140 (NKLD) each bind GTP. The segment at 137 to 140 (NKLD) is G4. A G5 region spans residues 173-175 (SAF).

It belongs to the TRAFAC class translation factor GTPase superfamily. Classic translation factor GTPase family. EF-Tu/EF-1A subfamily. As to quaternary structure, monomer.

It is found in the cytoplasm. It catalyses the reaction GTP + H2O = GDP + phosphate + H(+). Its function is as follows. GTP hydrolase that promotes the GTP-dependent binding of aminoacyl-tRNA to the A-site of ribosomes during protein biosynthesis. The polypeptide is Elongation factor Tu (Borreliella burgdorferi (strain ATCC 35210 / DSM 4680 / CIP 102532 / B31) (Borrelia burgdorferi)).